The chain runs to 25 residues: Panurgine R (25 aa).

2 disulfide bridges follow: C8/C23 and C11/C19.

The protein localises to the target cell membrane. It localises to the secreted. In terms of biological role, antimicrobial peptide active against Gram-positive bacteria M.luteus (MIC=0.8 uM) and B.subtilis (MIC=1.5 uM). Less active against Gram-negative bacteria E.coli (MIC=32.5 uM) and yeast C.albicans (MIC=18.7 uM). Not active against S.aureus and P.aeruginosa. Has no hemolytic activity against human erythrocytes. Probably acts by disrupting membranes of target cells. The polypeptide is Panurgine R (Panurgus calcaratus (Solitary bee)).